The primary structure comprises 239 residues: Non-classical arabinogalactan protein 30 (239 aa).

An N-terminal signal peptide occupies residues 1–24; it reads MGIIGKSVSLTLFALLCFTSSVFT. A glycan (N-linked (GlcNAc...) asparagine) is linked at Asn-106.

The protein belongs to the non-classical AGP family. As to expression, specifically expressed in root tips.

It is found in the secreted. The protein localises to the cell wall. Its function is as follows. Proteoglycan required for the timing of seed germination. May function in the abscisic acid (ABA) response. This is Non-classical arabinogalactan protein 30 from Arabidopsis thaliana (Mouse-ear cress).